A 101-amino-acid chain; its full sequence is Cilia- and flagella-associated protein 141 (101 aa).

As to quaternary structure, microtubule inner protein component of sperm flagellar doublet microtubules.

The protein localises to the cytoplasm. Its subcellular location is the cytoskeleton. The protein resides in the cilium axoneme. It is found in the flagellum axoneme. Functionally, microtubule inner protein (MIP) part of the dynein-decorated doublet microtubules (DMTs) in cilia axoneme, which is required for motile cilia beating. This is Cilia- and flagella-associated protein 141 from Mus musculus (Mouse).